We begin with the raw amino-acid sequence, 818 residues long: Sodium/hydrogen exchanger 1 (818 aa).

At 1 to 98 (MLLWSGICGL…FPVLGIDYTH (98 aa)) the chain is on the extracellular side. The disordered stretch occupies residues 39–76 (PSPTASTIRGSEPPRERSIGDVTTAPPELAPESRPVNH). N-linked (GlcNAc...) asparagine glycosylation is present at N75. A helical membrane pass occupies residues 99–121 (VRTPFEISLWILLACLMKIGFHV). The Cytoplasmic segment spans residues 122–130 (IPTISSIVP). The helical transmembrane segment at 131-148 (ESCLLIVVGLLVGGLIKA) threads the bilayer. The Extracellular portion of the chain corresponds to 149–158 (VGETPPFLQS). Residues 159–176 (EVFFLFLLPPIILDAGYF) form a helical membrane-spanning segment. Residues 177–186 (LPLRQFTENL) lie on the Cytoplasmic side of the membrane. A helical transmembrane segment spans residues 187–215 (GTILIFAVVGTLWNAFFLGGLMYAVCLVG). The Extracellular portion of the chain corresponds to 216-222 (GEQINNI). Residues 223 to 249 (GLLDNLLFGSIISAVDPVAVLAVFEEI) traverse the membrane as a helical segment. Residues 250–252 (HIN) are Cytoplasmic-facing. A helical membrane pass occupies residues 253–283 (ELLHILVFGESLLNDAVTVVLYHLFEEFANY). The Extracellular portion of the chain corresponds to 284-287 (DRVG). The chain crosses the membrane as a helical span at residues 288–322 (IVDIVLGFLSFFVVSLGGVFVGVVYGVIAAFTSRF). Over 323 to 328 (TSHIRV) the chain is Cytoplasmic. A helical transmembrane segment spans residues 329–341 (IEPLFVFLYSYMA). The Extracellular portion of the chain corresponds to 342 to 350 (YLSAELFHL). The chain crosses the membrane as a helical span at residues 351-371 (SGIMALIASGVVMRPYVEANI). The Cytoplasmic segment spans residues 372–373 (SH). Residues 374 to 404 (KSHTTIKYFLKMWSSVSETLIFIFLGVSTVA) traverse the membrane as a helical segment. Over 405 to 410 (GSHHWN) the chain is Extracellular. The chain crosses the membrane as a helical span at residues 411-438 (WTFVISTLLFCLIARVLGVLGLTWFINK). Topologically, residues 439-444 (FRIVKL) are cytoplasmic. Residues 445 to 469 (TPKDQFIIAYGGLRGAIAFSLGHLL) form a helical membrane-spanning segment. At 470 to 475 (DKNHFP) the chain is on the extracellular side. A helical transmembrane segment spans residues 476–505 (MCDLFLTAIITVIFFTVFVQGMTIRPLVDL). The segment at 503 to 545 (VDLLAVKKKQETKRSINEEIHTQFLDHLLTGIEDICGHYGHHH) is interaction with TESC. Residues 506–818 (LAVKKKQETK…EGEPFIPKGQ (313 aa)) lie on the Cytoplasmic side of the membrane. The tract at residues 509 to 516 (KKKQETKR) is PI(4,5)P2-binding region. Residues 515-545 (KRSINEEIHTQFLDHLLTGIEDICGHYGHHH) form an interaction with CHP2 region. A confers pH-dependent PI(4,5)P2 binding region spans residues 540-545 (HYGHHH). The PI(4,5)P2-binding region stretch occupies residues 552–560 (RFNKKYVKK). S599 and S602 each carry phosphoserine. T603 is subject to Phosphothreonine. S605 and S648 each carry phosphoserine. The interaction with TESC stretch occupies residues 633–818 (KILRNNLQKT…EGEPFIPKGQ (186 aa)). An interaction with CALM1 region spans residues 633 to 818 (KILRNNLQKT…EGEPFIPKGQ (186 aa)). The interaction with PPP3CA stretch occupies residues 684–687 (LTVP). 3 positions are modified to phosphoserine: S693, S697, and S703. Positions 715-720 (PVITID) are interaction with PPP3CA. Residues S723, S726, and S729 each carry the phosphoserine modification. A disordered region spans residues 739–818 (GKVLGLSREP…EGEPFIPKGQ (80 aa)). Phosphothreonine is present on residues T752 and T782. Residues 785 to 794 (PSDSPSSQRI) are compositionally biased toward polar residues. Phosphoserine is present on residues S788, S790, and S799.

The protein belongs to the monovalent cation:proton antiporter 1 (CPA1) transporter (TC 2.A.36) family. As to quaternary structure, homodimer; dimerization is crucial for its function. Oligomer. Interacts with CALM in a calcium-dependent manner. Interacts with TESC. Interacts (via the juxtamembrane region of the cytoplasmic C-terminal domain) with CHP1; the interaction occurs at the plasma membrane in a calcium-dependent manner. Interacts with CHP2; the interaction occurs in a calcium-dependent manner. Interacts with EZR; regulates the cytoskeletal interactions of SLC9A1 and promotes stress fiber formation. Ubiquitinated, leading to its degradation by the proteasome. Ubiquitination is reduced by CHP1. Post-translationally, O-glycosylated. In terms of processing, palmitoylated; may play a major role in SLC9A1 regulation. Phosphorylation at Thr-782 increases SLC9A1 activity. Specifically dephosphorylated at Thr-782 by PPP3CA that negatively regulates SLC9A1 activity. Phosphorylation at Ser-648 by AKT1 reduces SLC9A1 binding to CALM1.

The protein resides in the cell membrane. It localises to the basolateral cell membrane. It carries out the reaction Na(+)(in) + H(+)(out) = Na(+)(out) + H(+)(in). The catalysed reaction is Li(+)(out) + H(+)(in) = Li(+)(in) + H(+)(out). It catalyses the reaction Li(+)(in) + Na(+)(out) = Li(+)(out) + Na(+)(in). Its activity is regulated as follows. Activated at acidic pHs. Inhibited by cariporide and eniporide. Inhibited by amiloride and 5-amino-substituted derivatives. Phosphatidylinositol 4,5-bisphosphate (PI(4,5)P2) and phosphatidylinositol 3,4,5-trisphosphate (PI(3,4,5)P3) bind and differentially regulate SLC9A1 activity. Functionally, electroneutral Na(+) /H(+) antiporter that extrudes Na(+) in exchange for external protons driven by the inward sodium ion chemical gradient, protecting cells from acidification that occurs from metabolism. Exchanges intracellular H(+) ions for extracellular Na(+) in 1:1 stoichiometry. Plays a key role in maintening intracellular pH neutral and cell volume, and thus is important for cell growth, proliferation, migration and survival. In addition, can transport lithium Li(+) and also functions as a Na(+)/Li(+) antiporter. SLC9A1 also functions in membrane anchoring and organization of scaffolding complexes that coordinate signaling inputs. This Sus scrofa (Pig) protein is Sodium/hydrogen exchanger 1 (SLC9A1).